The following is a 128-amino-acid chain: Large ribosomal subunit protein bL12 (128 aa).

The protein belongs to the bacterial ribosomal protein bL12 family. Homodimer. Part of the ribosomal stalk of the 50S ribosomal subunit. Forms a multimeric L10(L12)X complex, where L10 forms an elongated spine to which 2 to 4 L12 dimers bind in a sequential fashion. Binds GTP-bound translation factors.

In terms of biological role, forms part of the ribosomal stalk which helps the ribosome interact with GTP-bound translation factors. Is thus essential for accurate translation. This Petrotoga mobilis (strain DSM 10674 / SJ95) protein is Large ribosomal subunit protein bL12.